A 361-amino-acid polypeptide reads, in one-letter code: tRNA-specific 2-thiouridylase MnmA (361 aa).

ATP contacts are provided by residues 11-18 and M37; that span reads GMSGGVDS. Residue C106 is the Nucleophile of the active site. The cysteines at positions 106 and 202 are disulfide-linked. Position 130 (G130) interacts with ATP. The interval 152 to 154 is interaction with tRNA; sequence KDQ. C202 (cysteine persulfide intermediate) is an active-site residue. The interaction with tRNA stretch occupies residues 308–309; that stretch reads RY.

This sequence belongs to the MnmA/TRMU family.

The protein resides in the cytoplasm. The enzyme catalyses S-sulfanyl-L-cysteinyl-[protein] + uridine(34) in tRNA + AH2 + ATP = 2-thiouridine(34) in tRNA + L-cysteinyl-[protein] + A + AMP + diphosphate + H(+). Functionally, catalyzes the 2-thiolation of uridine at the wobble position (U34) of tRNA, leading to the formation of s(2)U34. The polypeptide is tRNA-specific 2-thiouridylase MnmA (Clostridium botulinum (strain Eklund 17B / Type B)).